Consider the following 21-residue polypeptide: Antimicrobial peptide scolopin-1 (21 aa).

As to expression, expressed by the venom gland.

It localises to the secreted. In terms of biological role, antimicrobial peptide against both Gram-positive, -negative and yeast. Also induces histamine release by mast cells and shows moderate hemolytic activities against both human and rabbit red cells. The chain is Antimicrobial peptide scolopin-1 from Scolopendra mutilans (Chinese red-headed centipede).